The chain runs to 380 residues: Glucose-1-phosphate adenylyltransferase (380 aa).

Alpha-D-glucose 1-phosphate is bound by residues glycine 164, 179–180 (EK), and serine 190.

This sequence belongs to the bacterial/plant glucose-1-phosphate adenylyltransferase family. As to quaternary structure, homotetramer.

The enzyme catalyses alpha-D-glucose 1-phosphate + ATP + H(+) = ADP-alpha-D-glucose + diphosphate. It functions in the pathway glycan biosynthesis; glycogen biosynthesis. In terms of biological role, involved in the biosynthesis of ADP-glucose, a building block required for the elongation reactions to produce glycogen. Catalyzes the reaction between ATP and alpha-D-glucose 1-phosphate (G1P) to produce pyrophosphate and ADP-Glc. The sequence is that of Glucose-1-phosphate adenylyltransferase from Streptococcus pneumoniae serotype 2 (strain D39 / NCTC 7466).